The chain runs to 152 residues: Nucleoside diphosphate kinase (152 aa).

Residues Lys11, Phe59, Arg87, Thr93, Arg104, and Asn114 each coordinate ATP. The Pros-phosphohistidine intermediate role is filled by His117.

Belongs to the NDK family. In terms of assembly, homotetramer. Mg(2+) serves as cofactor.

The protein resides in the cytoplasm. The catalysed reaction is dZDP + ATP = dZTP + ADP. It catalyses the reaction a 2'-deoxyribonucleoside 5'-diphosphate + ATP = a 2'-deoxyribonucleoside 5'-triphosphate + ADP. It carries out the reaction a ribonucleoside 5'-diphosphate + ATP = a ribonucleoside 5'-triphosphate + ADP. Its pathway is purine metabolism. Functionally, major role in the synthesis of nucleoside triphosphates other than ATP. The ATP gamma phosphate is transferred to the NDP beta phosphate via a ping-pong mechanism, using a phosphorylated active-site intermediate. Its function is as follows. (Microbial infection) Catalyzes the phosphorylation of dZDP to dZTP, when the bacterium is infected by a phage that produces the substrate for the synthesis of dZTP (2- amino-2'-deoxyadenosine 5'-triphosphate), which is then used by the phage as a DNA polymerase substrate. The chain is Nucleoside diphosphate kinase from Synechococcus sp. (strain CC9311).